The sequence spans 168 residues: Alpha-N-acetylgalactosamine-specific lectin (168 aa).

The signal sequence occupies residues 1 to 18 (MAFFRALCFVLLVGFAAA). Residues 38–163 (YNGNCYRYFG…CSRAFAYVCK (126 aa)) form the C-type lectin domain. Cystine bridges form between Cys59-Cys162 and Cys136-Cys154.

In terms of assembly, monomer, homodimer and homooligomer.

In terms of biological role, alpha-N-acetylgalactosamine-specific lectin. The oligomeric form has Ca(2+)-dependent hemagglutination activity towards sheep erythrocytes. Its hemagglutination activity is inhibited by various monosaccharides, oligosaccharides and glycopeptides, including inhibition by GalNAc, blood group A trisaccharide, Tn antigen, mucin and asialomucin. The protein is Alpha-N-acetylgalactosamine-specific lectin of Patiria pectinifera (Starfish).